Here is a 371-residue protein sequence, read N- to C-terminus: Alanine racemase (371 aa).

Catalysis depends on lysine 35, which acts as the Proton acceptor; specific for D-alanine. Lysine 35 is modified (N6-(pyridoxal phosphate)lysine). Arginine 130 contacts substrate. Tyrosine 256 (proton acceptor; specific for L-alanine) is an active-site residue. A substrate-binding site is contributed by methionine 304.

This sequence belongs to the alanine racemase family. Requires pyridoxal 5'-phosphate as cofactor.

The catalysed reaction is L-alanine = D-alanine. Its pathway is amino-acid biosynthesis; D-alanine biosynthesis; D-alanine from L-alanine: step 1/1. Its function is as follows. Catalyzes the interconversion of L-alanine and D-alanine. May also act on other amino acids. This chain is Alanine racemase (alr), found in Verminephrobacter eiseniae (strain EF01-2).